The following is a 512-amino-acid chain: Rab11 family-interacting protein 2 (512 aa).

The 120-residue stretch at 1 to 120 folds into the C2 domain; sequence MMLSEQAQKW…DKQRRKTEWF (120 aa). Residues 15 to 102 are necessary for its cellular translocation to the plasma membrane; the sequence is VQVTVLQAKD…GLDKFLGQVA (88 aa). Disordered regions lie at residues 174–231 and 263–287; these read RKSD…MSDL and PESG…NQPG. Composition is skewed to polar residues over residues 221–231 and 277–287; these read RLSSAHSMSDL and SFDTSKLNQPG. Residue Ser227 is modified to Phosphoserine; by MARK2. Position 277 is a phosphoserine (Ser277). The short motif at 323–325 is the NPF 1 element; the sequence is NPF. Basic and acidic residues predominate over residues 347 to 374; the sequence is KESKREKREKVSLFERVTGKRDSRRPDK. Positions 347–390 are disordered; it reads KESKREKREKVSLFERVTGKRDSRRPDKLNNGGSDSPCDLKSPS. 2 short sequence motifs (NPF) span residues 406 to 408 and 440 to 442; these read NPF. An FIP-RBD domain is found at 437 to 499; it reads PDNNPFDATA…EETPSILRVP (63 aa). A necessary for interaction with AP2A1, RAB11A, subcellular location, endocytosis activity and homooligomerization region spans residues 465 to 512; that stretch reads ELLRRKDTHIRELEDYIDNLLVRVMEETPSILRVPYEPSRKAGKFTNS.

Homooligomerizes in a Rab11-independent manner. Forms a heterooligomeric complex with RAB11FIP4. Interacts with AP2A1, MYO5B, RAB25 and REPS1. Interacts with RAB11A and RAB11B (activated GTP-bound form). Interacts with NPC1L1. Interacts (via NPF motifs) with EHD1 and EHD3. Interacts with TICAM2; this interaction directs RAB11FIP2 to the phagosome. Interacts with RAB14 and RAB25 (GTP-bound forms). In terms of processing, phosphorylation at Ser-227 by MARK2 regulates epithelial cell polarity.

The protein localises to the cell membrane. It is found in the recycling endosome membrane. A Rab11 effector binding preferentially phosphatidylinositol 3,4,5-trisphosphate (PtdInsP3) and phosphatidic acid (PA) and acting in the regulation of the transport of vesicles from the endosomal recycling compartment (ERC) to the plasma membrane. Involved in insulin granule exocytosis. Also involved in receptor-mediated endocytosis and membrane trafficking of recycling endosomes, probably originating from clathrin-coated vesicles. Required in a complex with MYO5B and RAB11 for the transport of NPC1L1 to the plasma membrane. Also acts as a regulator of cell polarity. Plays an essential role in phagocytosis through a mechanism involving TICAM2, RAC1 and CDC42 Rho GTPases for controlling actin-dynamics. In Mus musculus (Mouse), this protein is Rab11 family-interacting protein 2 (Rab11fip2).